Here is a 247-residue protein sequence, read N- to C-terminus: tRNA pseudouridine synthase A (247 aa).

The Nucleophile role is filled by Asp52. Residue Tyr113 coordinates substrate.

It belongs to the tRNA pseudouridine synthase TruA family. As to quaternary structure, homodimer.

The enzyme catalyses uridine(38/39/40) in tRNA = pseudouridine(38/39/40) in tRNA. Formation of pseudouridine at positions 38, 39 and 40 in the anticodon stem and loop of transfer RNAs. This chain is tRNA pseudouridine synthase A, found in Sinorhizobium fredii (strain NBRC 101917 / NGR234).